A 1390-amino-acid polypeptide reads, in one-letter code: Bromodomain adjacent to zinc finger domain protein 2 (1390 aa).

3 disordered regions span residues 30–67, 178–215, and 235–269; these read AKIQ…QNEA, AKKK…AANN, and QKQQ…DVKN. Over residues 35–45 the composition is skewed to polar residues; that stretch reads ATASSPSKSTN. 2 stretches are compositionally biased toward low complexity: residues 46-63 and 186-215; these read GTSA…TSSS and ASTS…AANN. Positions 243–269 are enriched in basic and acidic residues; it reads DTQKKADQAKKAKELAKQQQKEQDVKN. In terms of domain architecture, MBD spans 323–395; sequence KTNEAMLRLP…DNFLFNTKLV (73 aa). A DDT domain is found at 524-588; the sequence is SQGFADALMV…LRLALEFPGM (65 aa). Residues 705-724 show a composition bias toward basic and acidic residues; the sequence is KEEQNHESDSEPPTRPDTPK. A disordered region spans residues 705-729; it reads KEEQNHESDSEPPTRPDTPKKATVA. Residues 1100 to 1149 form a PHD-type zinc finger; it reads EALCQICKSMDGDEMLVCDGCESGCHMECFRPRMTKVPEGDWFCQRCREE. The tract at residues 1218–1241 is disordered; that stretch reads EERELEDDNHAENGENTKNGHMNG. Residues 1273-1377 form the Bromo domain; that stretch reads LPKNMNKELC…KFFQKRWKQL (105 aa).

It belongs to the WAL family. In terms of assembly, interacts with set-6. Broadly expressed in the nervous system, including head, body and tail neurons.

It is found in the nucleus. It localises to the chromosome. Its function is as follows. Chromatin reader protein, involved in positively modulating the rate of age-related behavioral deterioration. Positively modulates the level of global trimethylated 'Lys-9' of histone H3 (H3K9me3), but not of H3K9me2 or H3K9me1. May repress the expression of mitochondrial function-related genes by occupying their promoter regions, working in concert with histone methyltransferase, set-6. Involved in modulation of the mitochondrial unfolded protein response (UPR). Negatively regulates expression of bas-1, a serotonin (5-HT) and dopamine synthesizing enzyme (DOPA decarboxylase), with aging. Negatively modulates levels of endogenous 5-HT and dopamine with aging. Involved in modulating longevity, probably as a result of enhanced stress resistance via mechanisms related to dietary restriction and mitochondrial function. The sequence is that of Bromodomain adjacent to zinc finger domain protein 2 from Caenorhabditis elegans.